We begin with the raw amino-acid sequence, 193 residues long: Probable chorismate pyruvate-lyase (193 aa).

Arginine 81, leucine 119, and glutamate 177 together coordinate substrate.

This sequence belongs to the UbiC family.

It is found in the cytoplasm. The catalysed reaction is chorismate = 4-hydroxybenzoate + pyruvate. It participates in cofactor biosynthesis; ubiquinone biosynthesis. Functionally, removes the pyruvyl group from chorismate, with concomitant aromatization of the ring, to provide 4-hydroxybenzoate (4HB) for the ubiquinone pathway. The sequence is that of Probable chorismate pyruvate-lyase from Idiomarina loihiensis (strain ATCC BAA-735 / DSM 15497 / L2-TR).